The primary structure comprises 167 residues: Phosphopantetheine adenylyltransferase (167 aa).

Ser11 provides a ligand contact to substrate. ATP-binding positions include 11-12 (SF) and His19. Substrate-binding residues include Lys43, Thr76, and Arg90. ATP is bound by residues 91–93 (GIR), Glu101, and 126–132 (YDALSST).

This sequence belongs to the bacterial CoaD family. Homohexamer. Mg(2+) is required as a cofactor.

It is found in the cytoplasm. It carries out the reaction (R)-4'-phosphopantetheine + ATP + H(+) = 3'-dephospho-CoA + diphosphate. It functions in the pathway cofactor biosynthesis; coenzyme A biosynthesis; CoA from (R)-pantothenate: step 4/5. Reversibly transfers an adenylyl group from ATP to 4'-phosphopantetheine, yielding dephospho-CoA (dPCoA) and pyrophosphate. This Lacticaseibacillus paracasei (strain ATCC 334 / BCRC 17002 / CCUG 31169 / CIP 107868 / KCTC 3260 / NRRL B-441) (Lactobacillus paracasei) protein is Phosphopantetheine adenylyltransferase.